Reading from the N-terminus, the 700-residue chain is Elongation factor G (700 aa).

The tr-type G domain maps to 8–290; sequence ERYRNIGISA…AVIDYLPSPV (283 aa). GTP is bound by residues 17 to 24, 88 to 92, and 142 to 145; these read AHIDAGKT, DTPGH, and NKMD.

The protein belongs to the TRAFAC class translation factor GTPase superfamily. Classic translation factor GTPase family. EF-G/EF-2 subfamily.

The protein localises to the cytoplasm. Functionally, catalyzes the GTP-dependent ribosomal translocation step during translation elongation. During this step, the ribosome changes from the pre-translocational (PRE) to the post-translocational (POST) state as the newly formed A-site-bound peptidyl-tRNA and P-site-bound deacylated tRNA move to the P and E sites, respectively. Catalyzes the coordinated movement of the two tRNA molecules, the mRNA and conformational changes in the ribosome. The polypeptide is Elongation factor G (Paracidovorax citrulli (strain AAC00-1) (Acidovorax citrulli)).